Reading from the N-terminus, the 688-residue chain is Glycine--tRNA ligase beta subunit (688 aa).

Belongs to the class-II aminoacyl-tRNA synthetase family. In terms of assembly, tetramer of two alpha and two beta subunits.

The protein localises to the cytoplasm. The catalysed reaction is tRNA(Gly) + glycine + ATP = glycyl-tRNA(Gly) + AMP + diphosphate. The polypeptide is Glycine--tRNA ligase beta subunit (glyS) (Haemophilus influenzae (strain ATCC 51907 / DSM 11121 / KW20 / Rd)).